The chain runs to 830 residues: BLOC-2 complex member HPS5 homolog (830 aa).

3 WD repeats span residues 25-64, 67-106, and 114-153; these read RNNS…FLAI, SQLG…STDG, and GGPA…GRNI. Residues 578–604 adopt a coiled-coil conformation; the sequence is DTETIVRLLRKLETLMEENEEPNARLK.

The protein belongs to the HPS5 family.

In terms of biological role, has a role in the biogenesis of eye pigment granules. Eye pigment granules are specialized forms of late endosomes or lysosomes. Biogenesis of pigment granules in the eye requires molecular components required for protein delivery to lysosomes. The chain is BLOC-2 complex member HPS5 homolog from Anopheles gambiae (African malaria mosquito).